The primary structure comprises 304 residues: Mitochondrial glycine transporter (304 aa).

Solcar repeat units follow at residues 3–82 (GKSK…VREA), 106–186 (ENLI…LKVA), and 209–293 (SSAM…LVKR). 6 helical membrane-spanning segments follow: residues 9 to 34 (IYAG…TRVQ), 57 to 83 (GTLP…REAV), 108 to 133 (LISG…VRYE), 161 to 184 (GWAA…EQLK), 213 to 239 (INSV…KTRM), and 268 to 286 (GLAL…SWCI).

It belongs to the mitochondrial carrier (TC 2.A.29) family. SLC25A38 subfamily.

It localises to the mitochondrion inner membrane. It catalyses the reaction glycine(in) = glycine(out). Mitochondrial glycine transporter that imports glycine into the mitochondrial matrix. Plays an important role in providing glycine for the first enzymatic step in heme biosynthesis, the condensation of glycine with succinyl-CoA to produce 5-aminolevulinate (ALA) in the mitochondrial matrix. This chain is Mitochondrial glycine transporter, found in Yarrowia lipolytica (strain CLIB 122 / E 150) (Yeast).